The chain runs to 136 residues: uncharacterized protein (136 aa).

This is an uncharacterized protein from Pasteurella multocida (strain Pm70).